A 1095-amino-acid chain; its full sequence is DNA-directed RNA polymerase subunit beta (1095 aa).

The tract at residues 1069–1095 (DLMQDVNPRRSTPSRPTYESLGKEYEE) is disordered.

This sequence belongs to the RNA polymerase beta chain family. As to quaternary structure, in cyanobacteria the RNAP catalytic core is composed of 2 alpha, 1 beta, 1 beta', 1 gamma and 1 omega subunit. When a sigma factor is associated with the core the holoenzyme is formed, which can initiate transcription.

The catalysed reaction is RNA(n) + a ribonucleoside 5'-triphosphate = RNA(n+1) + diphosphate. Its function is as follows. DNA-dependent RNA polymerase catalyzes the transcription of DNA into RNA using the four ribonucleoside triphosphates as substrates. The polypeptide is DNA-directed RNA polymerase subunit beta (Prochlorococcus marinus (strain NATL2A)).